The chain runs to 765 residues: Transient receptor potential cation channel subfamily V member 6 (765 aa).

The Cytoplasmic portion of the chain corresponds to 1–367; the sequence is MGPLQGDGGP…SLKWKRYGRP (367 aa). ANK repeat units lie at residues 84 to 114, 118 to 147, and 156 to 185; these read IWESPLLLAAKDNDVQALNKLLKYEDCKVHQ, MGETALHIAALYDNLEAAMVLMEAAPELVF, and EGQTALHIAVVNQNMNLVRALLARRASVSA. An interaction with calmodulin region spans residues 133–143; that stretch reads EAAMVLMEAAP. Tyrosine 201 carries the phosphotyrosine; by SRC modification. ANK repeat units lie at residues 202-231, 235-277, and 279-308; these read FGEHPLSFAACVNSEEIVRLLIEHGADIRA, LGNT…LVPN, and QGLTPFKLAGVEGNTVMFQHLMQKRKHTQW. The helical transmembrane segment at 368–388 threads the bilayer; that stretch reads YFCMLGAIYLLYIICFTMCCI. At 389–425 the chain is on the extracellular side; the sequence is YRPLKPRTNNRTSPRDNTLLQQKLLQEAYMTPKDDIR. The N-linked (GlcNAc...) asparagine glycan is linked to asparagine 398. A helical membrane pass occupies residues 426–448; it reads LVGELVTVIGAIIILLVEVPDIF. The Cytoplasmic segment spans residues 449–463; it reads RMGVTRFFGQTILGG. Residues 464–483 traverse the membrane as a helical segment; it reads PFHVLIITYAFMVLVTMVMR. Topologically, residues 484 to 489 are extracellular; the sequence is LISASG. The helical transmembrane segment at 490–509 threads the bilayer; it reads EVVPMSFALVLGWCNVMYFA. Topologically, residues 510–529 are cytoplasmic; the sequence is RGFQMLGPFTIMIQKMIFGD. The chain crosses the membrane as a helical span at residues 530–552; that stretch reads LMRFCWLMAVVILGFASAFYIIF. Over 553-565 the chain is Extracellular; that stretch reads QTEDPEELGHFYD. Residues 566 to 585 constitute an intramembrane region (pore-forming); sequence YPMALFSTFELFLTIIDGPA. The Selectivity filter signature appears at 581-585; sequence IDGPA. Aspartate 582 is a binding site for Ca(2+). Topologically, residues 586 to 596 are extracellular; that stretch reads NYNVDLPFMYS. A helical membrane pass occupies residues 597–617; sequence ITYAAFAIIATLLMLNLLIAM. Residues 618 to 765 are Cytoplasmic-facing; the sequence is MGDTHWRVAH…EDGESWEYQI (148 aa). The tract at residues 638–642 is interaction with S100A10; that stretch reads VATTV. An interaction with calmodulin region spans residues 731-751; sequence SSANWERLRQGTLRRDLRGII. The residue at position 742 (threonine 742) is a Phosphothreonine; by PKC/PRKCA.

The protein belongs to the transient receptor (TC 1.A.4) family. TrpV subfamily. TRPV6 sub-subfamily. As to quaternary structure, homotetramer. Probably also forms heterotetramers with TRPV5. Interacts with TRPV5. Interacts with S100A10 and probably with the ANAX2-S100A10 heterotetramer. The interaction with S100A10 is required for the trafficking to the plasma membrane. Interacts with BSPRY. Interacts with TCAF1 and TCAF2 isoform 2. Interacts with calmodulin. Post-translationally, glycosylated. Phosphorylation at Tyr-201 by SRC leads to an increased calcium influx through the channel. Probably dephosphorylated at this site by PTPN1. Phosphorylation by PRKCA at the calmodulin binding site delays channel inactivation. Expressed at high levels in the gastrointestinal tract, including esophagus, stomach, duodenum, jejunum, ileum and colon, and in pancreas, placenta, prostate and salivary gland. Expressed at moderate levels in liver, kidney and testis. Expressed in trophoblasts of placenta villus trees (at protein level). Expressed in locally advanced prostate cancer, metastatic and androgen-insensitive prostatic lesions but not detected in healthy prostate tissue and benign prostatic hyperplasia.

It is found in the cell membrane. It carries out the reaction Ca(2+)(in) = Ca(2+)(out). In terms of biological role, calcium selective cation channel that mediates Ca(2+) uptake in various tissues, including the intestine. Important for normal Ca(2+) ion homeostasis in the body, including bone and skin. The channel is activated by low internal calcium level, probably including intracellular calcium store depletion, and the current exhibits an inward rectification. Inactivation includes both a rapid Ca(2+)-dependent and a slower Ca(2+)-calmodulin-dependent mechanism; the latter may be regulated by phosphorylation. In vitro, is slowly inhibited by Mg(2+) in a voltage-independent manner. Heteromeric assembly with TRPV5 seems to modify channel properties. TRPV5-TRPV6 heteromultimeric concatemers exhibit voltage-dependent gating. The sequence is that of Transient receptor potential cation channel subfamily V member 6 (TRPV6) from Homo sapiens (Human).